The primary structure comprises 311 residues: MTKLIFMGTPDFSATVLKGLLEDSHYHVLAVVTQPDRAVGRKKEIKMTPVKQLALEHGLKVYQPEKLSGSSEMVELMNLGADGIVTAAFGQFLPMILINSVDFAVNVHASLLPKYRGGAPIHYAIINGDKKAGVTIMEMVKEMDAGDMIAKASTPITDADDVGTMFEKLAIIGRDLLLQTLPGYLSGKIEPQAQDDSQATFSPNISSQEEKIDWSKSARDIFNQVRGMNPWPVAHTLLDGKRFKIYAVEVVNGAGNPGEIIEKTKKALIVAANQDALSLKLVQPAGKPKMSITDFLNGLGQKLKVGDYFGK.

A (6S)-5,6,7,8-tetrahydrofolate-binding site is contributed by 110–113; the sequence is SLLP.

It belongs to the Fmt family.

The enzyme catalyses L-methionyl-tRNA(fMet) + (6R)-10-formyltetrahydrofolate = N-formyl-L-methionyl-tRNA(fMet) + (6S)-5,6,7,8-tetrahydrofolate + H(+). Its function is as follows. Attaches a formyl group to the free amino group of methionyl-tRNA(fMet). The formyl group appears to play a dual role in the initiator identity of N-formylmethionyl-tRNA by promoting its recognition by IF2 and preventing the misappropriation of this tRNA by the elongation apparatus. The chain is Methionyl-tRNA formyltransferase from Streptococcus mutans serotype c (strain ATCC 700610 / UA159).